A 957-amino-acid polypeptide reads, in one-letter code: Glycine dehydrogenase (decarboxylating) (957 aa).

K708 carries the N6-(pyridoxal phosphate)lysine modification.

The protein belongs to the GcvP family. In terms of assembly, the glycine cleavage system is composed of four proteins: P, T, L and H. The cofactor is pyridoxal 5'-phosphate.

It carries out the reaction N(6)-[(R)-lipoyl]-L-lysyl-[glycine-cleavage complex H protein] + glycine + H(+) = N(6)-[(R)-S(8)-aminomethyldihydrolipoyl]-L-lysyl-[glycine-cleavage complex H protein] + CO2. Its function is as follows. The glycine cleavage system catalyzes the degradation of glycine. The P protein binds the alpha-amino group of glycine through its pyridoxal phosphate cofactor; CO(2) is released and the remaining methylamine moiety is then transferred to the lipoamide cofactor of the H protein. The polypeptide is Glycine dehydrogenase (decarboxylating) (Escherichia coli O81 (strain ED1a)).